Reading from the N-terminus, the 1711-residue chain is Serine/threonine-protein kinase MRCK beta (1711 aa).

The Protein kinase domain occupies 76–342 (FEIIKVIGRG…IEDFKKHAFF (267 aa)). Residues 82 to 90 (IGRGAFGEV) and Lys-105 each bind ATP. Residue Asp-200 is the Proton acceptor of the active site. Phosphoserine; by autocatalysis is present on residues Ser-221 and Ser-233. Phosphothreonine; by autocatalysis is present on Thr-239. The 71-residue stretch at 343–413 (EGLNWENIRN…TTESCFSDRG (71 aa)) folds into the AGC-kinase C-terminal domain. At Thr-423 the chain carries Phosphothreonine. 2 coiled-coil regions span residues 431-815 (QRDL…AHWE) and 878-939 (ELQS…FRAD). Positions 461–484 (LQESTQTVQSLHGSSRALSNSNRD) are disordered. The span at 463–481 (ESTQTVQSLHGSSRALSNS) shows a compositional bias: polar residues. Arg-671 carries the omega-N-methylarginine modification. Position 954 is a phosphotyrosine (Tyr-954). Residues 969–1009 (SSASEQETQAPKPEASPSMSVAASEQQEDMARPPQRPSAVP) form a disordered region. Residues 1025 to 1075 (AHQFSIKSFSSPTQCSHCTSLMVGLIRQGYACEVCSFACHVSCKDGAPQVC) form a Phorbol-ester/DAG-type zinc finger. The region spanning 1095 to 1214 (GTAYKGHVKV…WVGILEGLQS (120 aa)) is the PH domain. The region spanning 1240 to 1513 (IKAILTAAIV…RPLNSEGTLN (274 aa)) is the CNH domain. One can recognise a CRIB domain in the interval 1583 to 1596 (ISNPTNFNHVAHMG). Residues 1611 to 1711 (AVPPSQEERP…EGLEQPACDT (101 aa)) form a disordered region. Over residues 1641–1650 (WPSSGGSEPS) the composition is skewed to polar residues. Residues 1664-1675 (DFDKEPDSDSTK) show a composition bias toward basic and acidic residues. Phosphoserine is present on residues Ser-1680, Ser-1682, Ser-1686, Ser-1690, and Ser-1693.

Belongs to the protein kinase superfamily. AGC Ser/Thr protein kinase family. DMPK subfamily. In terms of assembly, homodimer and homotetramer via the coiled coil regions. Interacts tightly with GTP-bound but not GDP-bound CDC42. Interacts with TJP1, when in the presence of catalytically active CDC42. Forms a tripartite complex with MYO18A and LURAP1 with the latter acting as an adapter connecting CDC42BPB and MYO18A. LURAP1 binding results in activation of CDC42BPB by abolition of its negative autoregulation. Interacts with STRIP1, STRN3 and SIKE1. Interacts with CPNE4 (via VWFA domain). Interacts with LURAP1. Interacts (via AGC-kinase C-terminal domain) with FAM89B/LRAP25 (via LRR repeat). Forms a tripartite complex with FAM89B/LRAP25 and LIMK1. Mg(2+) is required as a cofactor. In terms of processing, proteolytically cleaved by caspases upon apoptosis induction. Expressed in all tissues examined, with high levels in heart, brain, placenta and lung.

It is found in the cytoplasm. The protein resides in the cell membrane. Its subcellular location is the cell junction. It localises to the cell projection. The protein localises to the lamellipodium. It carries out the reaction L-seryl-[protein] + ATP = O-phospho-L-seryl-[protein] + ADP + H(+). The catalysed reaction is L-threonyl-[protein] + ATP = O-phospho-L-threonyl-[protein] + ADP + H(+). With respect to regulation, maintained in an inactive, closed conformation by an interaction between the kinase domain and the negative autoregulatory C-terminal coiled-coil region. Agonist binding to the phorbol ester binding site disrupts this, releasing the kinase domain to allow N-terminus-mediated dimerization and kinase activation by transautophosphorylation. Inhibited by chelerythrine chloride. Functionally, serine/threonine-protein kinase which is an important downstream effector of CDC42 and plays a role in the regulation of cytoskeleton reorganization and cell migration. Regulates actin cytoskeletal reorganization via phosphorylation of PPP1R12C and MYL9/MLC2. In concert with MYO18A and LURAP1, is involved in modulating lamellar actomyosin retrograde flow that is crucial to cell protrusion and migration. Phosphorylates PPP1R12A. In concert with FAM89B/LRAP25 mediates the targeting of LIMK1 to the lamellipodium resulting in its activation and subsequent phosphorylation of CFL1 which is important for lamellipodial F-actin regulation. In Homo sapiens (Human), this protein is Serine/threonine-protein kinase MRCK beta.